The chain runs to 252 residues: MKQTQRHNGIIELVKQQGYVSTEELVEHFSVSPQTIRRDLNELAEQNLILRHHGGAALPSSSVNTPWHDRKATQTEEKERIARKVAEQIPNGSTLFIDIGTTPEAVAHALLNHSNLRIVTNNLNVANTLMVKEDFRIILAGGELRSRDGGIIGEATLDFISQFRLDFGILGISGIDSDGSLLEFDYHEVRTKRAIIENSRHVMLVVDHSKFGRNAMVNMGSISMVDAVYTDAPPPVSVMQVLTDHHIQLELC.

Positions 3–58 constitute an HTH deoR-type domain; that stretch reads QTQRHNGIIELVKQQGYVSTEELVEHFSVSPQTIRRDLNELAEQNLILRHHGGAAL. The H-T-H motif DNA-binding region spans 20-39; sequence VSTEELVEHFSVSPQTIRRD.

Functionally, repressor of the glycerol-3-phosphate regulon. The sequence is that of Glycerol-3-phosphate regulon repressor (glpR) from Escherichia coli (strain K12).